The chain runs to 528 residues: ATP synthase subunit alpha (528 aa).

G169–T176 provides a ligand contact to ATP.

This sequence belongs to the ATPase alpha/beta chains family. F-type ATPases have 2 components, CF(1) - the catalytic core - and CF(0) - the membrane proton channel. CF(1) has five subunits: alpha(3), beta(3), gamma(1), delta(1), epsilon(1). CF(0) has three main subunits: a(1), b(2) and c(9-12). The alpha and beta chains form an alternating ring which encloses part of the gamma chain. CF(1) is attached to CF(0) by a central stalk formed by the gamma and epsilon chains, while a peripheral stalk is formed by the delta and b chains.

The protein localises to the cell membrane. It carries out the reaction ATP + H2O + 4 H(+)(in) = ADP + phosphate + 5 H(+)(out). Produces ATP from ADP in the presence of a proton gradient across the membrane. The alpha chain is a regulatory subunit. This Mycoplasmopsis agalactiae (strain NCTC 10123 / CIP 59.7 / PG2) (Mycoplasma agalactiae) protein is ATP synthase subunit alpha.